Here is a 740-residue protein sequence, read N- to C-terminus: MDPKAYSEAVAALVGARHSNPFAFLGPHEGRAEGGRGGFCIRCFRPKATAVSLISAADDTVLGRMKRLHPDGLFGIDLPEAPGALAYRLRVSEGDEDRDIEDPYRFGPVLGELDRHLLGEGTHLDIYRKMGAHPMTRDGVRGTGFALWAPNATRVSVIGDFNGWDGRLHPMRAHPGSGVWDIFLPGVVEGHLYKYELLGPDGSLLPAKADPYAFQAEKPPHTASVVRGLGTYAWNDGRWMSERADRVATSAPVSIYEVHLGSWRHGGGDRSLSYREMAEQLIPYVKEMGFTHIELLPVSEFPFDGSWGYQPIGLFAPTSRFGEPDDFRHFVDRCHQEGVGVILDWVAGHFPEDAHGLSWFDGTHLYEHSDPRQGRHMDWGTYIFNYGRNEVRNFLLANALFWLEQFHIDGLRVDAVASMLYLDYSRKAGEWVPNKFGGRENLEAIDFLRRMNELVYGRFPGAVTIAEESTAWPMVSRPVHLGGLGFGYKWNMGWMNDTLSYMSQDPIYRRFHQHDLSFGLLYAFTENFVLPLSHDEVVHGKRSILGRMPGDAWQQFANLRAYYGFMWTHPGKKLLFMGCEFAQGREWNHNASLDWHLLDIDWHKGVQALVRDLNGLYAGVPALHDRDTEGYGFSWIDCTDADQSVLAFLRFGETAEDVVMVVCNFTPNPRHGYRLGAPIAGRWREIFNTDSAHYGGSNMGNSVVETEETKSHGHAQSVVLTLPPLATIVLRPDGPITRIA.

D414 functions as the Nucleophile in the catalytic mechanism. E467 functions as the Proton donor in the catalytic mechanism.

This sequence belongs to the glycosyl hydrolase 13 family. GlgB subfamily. In terms of assembly, monomer.

It carries out the reaction Transfers a segment of a (1-&gt;4)-alpha-D-glucan chain to a primary hydroxy group in a similar glucan chain.. The protein operates within glycan biosynthesis; glycogen biosynthesis. Its function is as follows. Catalyzes the formation of the alpha-1,6-glucosidic linkages in glycogen by scission of a 1,4-alpha-linked oligosaccharide from growing alpha-1,4-glucan chains and the subsequent attachment of the oligosaccharide to the alpha-1,6 position. The sequence is that of 1,4-alpha-glucan branching enzyme GlgB from Rhodospirillum rubrum (strain ATCC 11170 / ATH 1.1.1 / DSM 467 / LMG 4362 / NCIMB 8255 / S1).